The chain runs to 325 residues: Phospho-N-acetylmuramoyl-pentapeptide-transferase (325 aa).

10 consecutive transmembrane segments (helical) span residues 9–29 (ALLVSFFVALGGGRVLIPWLL), 53–73 (TMGGIIFLLSLVVTVVVFQAF), 77–97 (TLLLLITTLLFGLLGFLDDYL), 112–132 (KLLGQVIFSLVLTFGAVAFLG), 154–174 (LGNVFFFAATIFIMVGFANAV), 182–202 (GLCSSVTLIVMSFFAMTSLAL), 204–224 (EKGLFIFALALMGGLVGFLVY), 231–251 (VFMGDTGSLALGAAVAGFAVL), 257–277 (FLLLVGLIYVVETLSVIIQVI), and 305–325 (KIVLVFSLVTLIMVLISGYGL).

It belongs to the glycosyltransferase 4 family. MraY subfamily. Requires Mg(2+) as cofactor.

It is found in the cell membrane. It carries out the reaction UDP-N-acetyl-alpha-D-muramoyl-L-alanyl-gamma-D-glutamyl-meso-2,6-diaminopimeloyl-D-alanyl-D-alanine + di-trans,octa-cis-undecaprenyl phosphate = di-trans,octa-cis-undecaprenyl diphospho-N-acetyl-alpha-D-muramoyl-L-alanyl-D-glutamyl-meso-2,6-diaminopimeloyl-D-alanyl-D-alanine + UMP. It functions in the pathway cell wall biogenesis; peptidoglycan biosynthesis. In terms of biological role, catalyzes the initial step of the lipid cycle reactions in the biosynthesis of the cell wall peptidoglycan: transfers peptidoglycan precursor phospho-MurNAc-pentapeptide from UDP-MurNAc-pentapeptide onto the lipid carrier undecaprenyl phosphate, yielding undecaprenyl-pyrophosphoryl-MurNAc-pentapeptide, known as lipid I. The protein is Phospho-N-acetylmuramoyl-pentapeptide-transferase of Carboxydothermus hydrogenoformans (strain ATCC BAA-161 / DSM 6008 / Z-2901).